Reading from the N-terminus, the 261-residue chain is MICOS complex subunit Mic25 (261 aa).

Gly2 is lipidated: N-myristoyl glycine. 3 positions are modified to phosphoserine: Ser13, Ser31, and Ser33. Disordered regions lie at residues 39 to 59 (KDCS…PECS), 81 to 114 (CGPA…VKED), and 140 to 165 (TEKH…RLTR). The stretch at 109–202 (SAVKEDLKKF…AELYKLSSQQ (94 aa)) forms a coiled coil. Positions 154–165 (THEQQQSDRLTR) are enriched in basic and acidic residues. In terms of domain architecture, CHCH spans 220-261 (EPVCSGLQAQILRCYRDHLHEVLLCSDLAKAYQHCVSTARKG). 2 consecutive short sequence motifs (cx9C motif) follow at residues 223 to 233 (CSGLQAQILRC) and 244 to 254 (CSDLAKAYQHC). 2 disulfides stabilise this stretch: Cys223/Cys254 and Cys233/Cys244.

It belongs to the MICOS complex subunit Mic19 family. Metazoan Mic25 subfamily. As to quaternary structure, component of the mitochondrial contact site and cristae organizing system (MICOS) complex, composed of at least MICOS10/MIC10, CHCHD3/MIC19, CHCHD6/MIC25, APOOL/MIC27, IMMT/MIC60, APOO/MIC23/MIC26 and MICOS13/MIC13. This complex was also known under the names MINOS or MitOS complex. The MICOS complex associates with mitochondrial outer membrane proteins SAMM50, MTX1 and MTX2 (together described as components of the mitochondrial outer membrane sorting assembly machinery (SAM) complex) and DNAJC11, mitochondrial inner membrane protein TMEM11 and with HSPA9. The MICOS and SAM complexes together with DNAJC11 are part of a large protein complex spanning both membranes termed the mitochondrial intermembrane space bridging (MIB) complex. Interacts with DISC1. Interacts with IMMT/MIC60.

It localises to the mitochondrion inner membrane. It is found in the mitochondrion. Functionally, component of the MICOS complex, a large protein complex of the mitochondrial inner membrane that plays crucial roles in the maintenance of crista junctions, inner membrane architecture, and formation of contact sites to the outer membrane. The polypeptide is MICOS complex subunit Mic25 (Chchd6) (Rattus norvegicus (Rat)).